The following is a 460-amino-acid chain: Argininosuccinate lyase (460 aa).

It belongs to the lyase 1 family. Argininosuccinate lyase subfamily.

The protein resides in the cytoplasm. The enzyme catalyses 2-(N(omega)-L-arginino)succinate = fumarate + L-arginine. The protein operates within amino-acid biosynthesis; L-arginine biosynthesis; L-arginine from L-ornithine and carbamoyl phosphate: step 3/3. In Solibacter usitatus (strain Ellin6076), this protein is Argininosuccinate lyase.